The chain runs to 229 residues: 2-C-methyl-D-erythritol 4-phosphate cytidylyltransferase (229 aa).

This sequence belongs to the IspD/TarI cytidylyltransferase family. IspD subfamily.

The catalysed reaction is 2-C-methyl-D-erythritol 4-phosphate + CTP + H(+) = 4-CDP-2-C-methyl-D-erythritol + diphosphate. Its pathway is isoprenoid biosynthesis; isopentenyl diphosphate biosynthesis via DXP pathway; isopentenyl diphosphate from 1-deoxy-D-xylulose 5-phosphate: step 2/6. Its function is as follows. Catalyzes the formation of 4-diphosphocytidyl-2-C-methyl-D-erythritol from CTP and 2-C-methyl-D-erythritol 4-phosphate (MEP). In Clostridium botulinum (strain 657 / Type Ba4), this protein is 2-C-methyl-D-erythritol 4-phosphate cytidylyltransferase.